Reading from the N-terminus, the 662-residue chain is Rap guanine nucleotide exchange factor-like 1 (662 aa).

The segment at 1–149 (MKPLEKFLKK…PPWAPLGAPE (149 aa)) is disordered. The segment covering 20–48 (VAGGPGGGLGSCGGPGGGGGPGGGGGPAG) has biased composition (gly residues). A compositionally biased stretch (low complexity) spans 49–64 (GQRSLQRRQSVSRLLL). Positions 73–82 (AEPGLEPPVP) are enriched in pro residues. Residues 120–135 (LRSPSSYSSDELSPGE) are compositionally biased toward low complexity. A Ras-GEF domain is found at 424–660 (EPEDVANHLT…FELSYKLEAN (237 aa)).

Its function is as follows. Probable guanine nucleotide exchange factor (GEF). In Homo sapiens (Human), this protein is Rap guanine nucleotide exchange factor-like 1 (RAPGEFL1).